Reading from the N-terminus, the 106-residue chain is Iron-sulfur cluster assembly protein CyaY (106 aa).

Belongs to the frataxin family.

Its function is as follows. Involved in iron-sulfur (Fe-S) cluster assembly. May act as a regulator of Fe-S biogenesis. The protein is Iron-sulfur cluster assembly protein CyaY of Colwellia psychrerythraea (strain 34H / ATCC BAA-681) (Vibrio psychroerythus).